Consider the following 325-residue polypeptide: DNA repair and recombination protein RadA (325 aa).

107-114 is an ATP binding site; the sequence is GEFGSGKT.

Belongs to the eukaryotic RecA-like protein family.

Involved in DNA repair and in homologous recombination. Binds and assemble on single-stranded DNA to form a nucleoprotein filament. Hydrolyzes ATP in a ssDNA-dependent manner and promotes DNA strand exchange between homologous DNA molecules. This Methanosarcina acetivorans (strain ATCC 35395 / DSM 2834 / JCM 12185 / C2A) protein is DNA repair and recombination protein RadA.